A 333-amino-acid chain; its full sequence is Low specificity L-threonine aldolase (333 aa).

Lys-197 is subject to N6-(pyridoxal phosphate)lysine.

This sequence belongs to the threonine aldolase family. As to quaternary structure, homotetramer. The cofactor is pyridoxal 5'-phosphate.

It carries out the reaction L-threonine = acetaldehyde + glycine. The catalysed reaction is L-allo-threonine = acetaldehyde + glycine. Functionally, catalyzes the cleavage of L-allo-threonine and L-threonine to glycine and acetaldehyde. L-threo-phenylserine and L-erythro-phenylserine are also good substrates. This chain is Low specificity L-threonine aldolase (ltaE), found in Escherichia coli (strain K12).